Consider the following 154-residue polypeptide: Protein-export protein SecB (154 aa).

The protein belongs to the SecB family. As to quaternary structure, homotetramer, a dimer of dimers. One homotetramer interacts with 1 SecA dimer.

The protein resides in the cytoplasm. Functionally, one of the proteins required for the normal export of preproteins out of the cell cytoplasm. It is a molecular chaperone that binds to a subset of precursor proteins, maintaining them in a translocation-competent state. It also specifically binds to its receptor SecA. The sequence is that of Protein-export protein SecB from Blochmanniella pennsylvanica (strain BPEN).